The primary structure comprises 259 residues: Acetylglutamate kinase (259 aa).

Substrate-binding positions include 46-47 (GG), Arg-68, and Asn-162.

Belongs to the acetylglutamate kinase family. ArgB subfamily.

It is found in the cytoplasm. It carries out the reaction N-acetyl-L-glutamate + ATP = N-acetyl-L-glutamyl 5-phosphate + ADP. Its pathway is amino-acid biosynthesis; L-arginine biosynthesis; N(2)-acetyl-L-ornithine from L-glutamate: step 2/4. Its function is as follows. Catalyzes the ATP-dependent phosphorylation of N-acetyl-L-glutamate. This chain is Acetylglutamate kinase, found in Roseiflexus castenholzii (strain DSM 13941 / HLO8).